A 291-amino-acid chain; its full sequence is Geranyl diphosphate 2-C-methyltransferase (291 aa).

Belongs to the geranyl diphosphate 2-C-methyltransferase family. Mg(2+) serves as cofactor.

The enzyme catalyses (2E)-geranyl diphosphate + S-adenosyl-L-methionine = (E)-2-methylgeranyl diphosphate + S-adenosyl-L-homocysteine + H(+). In terms of biological role, catalyzes the SAM-dependent methylation of geranyl diphosphate (GPP) to yield (E)-2-methylgeranyl diphosphate (2-MeGPP). This Streptomyces ambofaciens (strain ATCC 23877 / 3486 / DSM 40053 / JCM 4204 / NBRC 12836 / NRRL B-2516) protein is Geranyl diphosphate 2-C-methyltransferase.